The primary structure comprises 235 residues: Sugar fermentation stimulation protein homolog (235 aa).

It belongs to the SfsA family.

This is Sugar fermentation stimulation protein homolog from Photorhabdus laumondii subsp. laumondii (strain DSM 15139 / CIP 105565 / TT01) (Photorhabdus luminescens subsp. laumondii).